The sequence spans 254 residues: 4-hydroxy-tetrahydrodipicolinate reductase (254 aa).

Residues G8 to V13, G87 to T89, and A111 to M114 each bind NAD(+). H143 (proton donor/acceptor) is an active-site residue. (S)-2,3,4,5-tetrahydrodipicolinate is bound at residue H144. Catalysis depends on K147, which acts as the Proton donor. Residue G153–T154 participates in (S)-2,3,4,5-tetrahydrodipicolinate binding.

The protein belongs to the DapB family.

It is found in the cytoplasm. It carries out the reaction (S)-2,3,4,5-tetrahydrodipicolinate + NAD(+) + H2O = (2S,4S)-4-hydroxy-2,3,4,5-tetrahydrodipicolinate + NADH + H(+). The catalysed reaction is (S)-2,3,4,5-tetrahydrodipicolinate + NADP(+) + H2O = (2S,4S)-4-hydroxy-2,3,4,5-tetrahydrodipicolinate + NADPH + H(+). It functions in the pathway amino-acid biosynthesis; L-lysine biosynthesis via DAP pathway; (S)-tetrahydrodipicolinate from L-aspartate: step 4/4. In terms of biological role, catalyzes the conversion of 4-hydroxy-tetrahydrodipicolinate (HTPA) to tetrahydrodipicolinate. This Nitratiruptor sp. (strain SB155-2) protein is 4-hydroxy-tetrahydrodipicolinate reductase.